The chain runs to 118 residues: Autophagy-related protein 8 (118 aa).

Gly116 is lipidated: Phosphatidylethanolamine amidated glycine. Residues 117–118 (SI) constitute a propeptide, removed in mature form.

This sequence belongs to the ATG8 family. In terms of assembly, conjugation to phosphatidylethanolamine (PE) leads to homodimerization. Interacts with ATG1, ATG3, ATG4, ATG7 and ATG12. The C-terminal Ser-117 and Ile-118 residues of ATG8 are removed by ATG4 to expose Gly-116 at the C-terminus. This Gly-116 forms then a thioester bond with ATG7 (E1-like activating enzyme) before being transferred to ATG3 (the specific E2 conjugating enzyme), in order to be finally amidated with phosphatidylethanolamine. This lipid modification anchors ATG8 to membranes and can be reversed by ATG4, releasing soluble ATG8.

The protein localises to the cytoplasmic vesicle. The protein resides in the cvt vesicle membrane. Its subcellular location is the autophagosome membrane. It is found in the vacuole membrane. Functionally, ubiquitin-like modifier involved in cytoplasm to vacuole transport (Cvt) vesicles and autophagosome formation. With ATG4, mediates the delivery of the vesicles and autophagosomes to the vacuole via the microtubule cytoskeleton. Required for selective autophagic degradation of the nucleus (nucleophagy) as well as for mitophagy which contributes to regulate mitochondrial quantity and quality by eliminating the mitochondria to a basal level to fulfill cellular energy requirements and preventing excess ROS production. Also participates in membrane fusion events that take place in the early secretory pathway. Also involved in endoplasmic reticulum-specific autophagic process and is essential for the survival of cells subjected to severe ER stress. The ATG8-PE conjugate mediates tethering between adjacent membranes and stimulates membrane hemifusion, leading to expansion of the autophagosomal membrane during autophagy. Moreover not only conjugation, but also subsequent ATG8-PE deconjugation is an important step required to facilitate multiple events during macroautophagy, and especially for efficient autophagosome biogenesis, the assembly of ATG9-containing tubulovesicular clusters into phagophores/autophagosomes, and for the disassembly of PAS-associated ATG components. Contributes to conidiation by regulating the conidial levels of the conidiation-related protein CP15 and mediates fungal oxidation resistance by controlling total superoxide dismutase (SOD) activity. The polypeptide is Autophagy-related protein 8 (Beauveria bassiana (strain ARSEF 2860) (White muscardine disease fungus)).